The sequence spans 117 residues: Large ribosomal subunit protein uL22 (117 aa).

This sequence belongs to the universal ribosomal protein uL22 family. Part of the 50S ribosomal subunit.

This protein binds specifically to 23S rRNA; its binding is stimulated by other ribosomal proteins, e.g. L4, L17, and L20. It is important during the early stages of 50S assembly. It makes multiple contacts with different domains of the 23S rRNA in the assembled 50S subunit and ribosome. Its function is as follows. The globular domain of the protein is located near the polypeptide exit tunnel on the outside of the subunit, while an extended beta-hairpin is found that lines the wall of the exit tunnel in the center of the 70S ribosome. The chain is Large ribosomal subunit protein uL22 from Leptospira biflexa serovar Patoc (strain Patoc 1 / ATCC 23582 / Paris).